Reading from the N-terminus, the 636-residue chain is Threonine--tRNA ligase (636 aa).

The region spanning Met1–Thr63 is the TGS domain. The tract at residues Asp243–Pro534 is catalytic. Zn(2+)-binding residues include Cys335, His386, and His511.

This sequence belongs to the class-II aminoacyl-tRNA synthetase family. As to quaternary structure, homodimer. Requires Zn(2+) as cofactor.

It is found in the cytoplasm. The enzyme catalyses tRNA(Thr) + L-threonine + ATP = L-threonyl-tRNA(Thr) + AMP + diphosphate + H(+). Its function is as follows. Catalyzes the attachment of threonine to tRNA(Thr) in a two-step reaction: L-threonine is first activated by ATP to form Thr-AMP and then transferred to the acceptor end of tRNA(Thr). Also edits incorrectly charged L-seryl-tRNA(Thr). In Pelobacter propionicus (strain DSM 2379 / NBRC 103807 / OttBd1), this protein is Threonine--tRNA ligase.